We begin with the raw amino-acid sequence, 68 residues long: MKTNNILKVAVGASSVAQKALNSIANKGYNFIEDKILKGNYISREEFEKLQTLVIKLKKELTELKGNN.

This is an uncharacterized protein from Rickettsia prowazekii (strain Madrid E).